The chain runs to 76 residues: MKLIIFAAISVAFMSFDQVLGSMLHGVKSEEAMMIADGSVVKPIDHGGPTTEPDGCQVCIAYNWGCSACQRKKNGK.

Positions Met-1–Gly-21 are cleaved as a signal peptide.

This sequence belongs to the CPGH1 family.

The protein localises to the secreted. It is found in the host cell. It localises to the host cytoplasm. Its subcellular location is the host nucleus. In terms of biological role, rust effector delivered into infected tissues to modulate host functions and contribute to pathogen virulence. Enhances leaf colonization by the bacteria Pseudomonas syringae and the oomycete Hyaloperonospora arabidopsidis pathogens in an Arabidopsis thaliana infection model. In Melampsora larici-populina (strain 98AG31 / pathotype 3-4-7) (Poplar leaf rust fungus), this protein is Candidate secreted effector protein MPL124497.